We begin with the raw amino-acid sequence, 87 residues long: Small ribosomal subunit protein bS20 (87 aa).

It belongs to the bacterial ribosomal protein bS20 family.

Its function is as follows. Binds directly to 16S ribosomal RNA. The polypeptide is Small ribosomal subunit protein bS20 (Beijerinckia indica subsp. indica (strain ATCC 9039 / DSM 1715 / NCIMB 8712)).